The sequence spans 429 residues: High mobility group nucleosome-binding domain-containing protein 5 (429 aa).

Residues methionine 1–valine 429 form a disordered region. Threonine 29 is modified (phosphothreonine). Basic residues predominate over residues lysine 35–lysine 44. Residue lysine 64 forms a Glycyl lysine isopeptide (Lys-Gly) (interchain with G-Cter in SUMO2) linkage. Position 90 is a phosphoserine (serine 90). 2 stretches are compositionally biased toward basic and acidic residues: residues methionine 92 to isoleucine 101 and glycine 109 to glutamate 124. Lysine 98 participates in a covalent cross-link: Glycyl lysine isopeptide (Lys-Gly) (interchain with G-Cter in SUMO1); alternate. A Glycyl lysine isopeptide (Lys-Gly) (interchain with G-Cter in SUMO2); alternate cross-link involves residue lysine 98. Residue lysine 121 forms a Glycyl lysine isopeptide (Lys-Gly) (interchain with G-Cter in SUMO2) linkage. A compositionally biased stretch (acidic residues) spans glutamate 133–glutamate 152. The span at arginine 153–glutamate 195 shows a compositional bias: basic and acidic residues. Over residues glutamate 196–valine 209 the composition is skewed to acidic residues. Composition is skewed to basic and acidic residues over residues lysine 210–arginine 387 and asparagine 413–valine 429.

It belongs to the HMGN family. In terms of tissue distribution, expressed in trophoblast giant cells.

It is found in the nucleus. Functionally, preferentially binds to euchromatin and modulates cellular transcription by counteracting linker histone-mediated chromatin compaction. This Rattus norvegicus (Rat) protein is High mobility group nucleosome-binding domain-containing protein 5.